The following is a 266-amino-acid chain: Manganese catalase (266 aa).

Residue E35 coordinates Mn(2+). 2 residues coordinate Ca(2+): D57 and D61. 4 residues coordinate Mn(2+): E66, H69, E148, and H181. The Ca(2+) site is built by N218, S220, and G222. Residues E243–G266 form a disordered region. Residues K255–G266 are compositionally biased toward basic and acidic residues.

This sequence belongs to the manganese catalase family. Homohexamer. Requires Ca(2+) as cofactor. The cofactor is Mn(2+).

The catalysed reaction is 2 H2O2 = O2 + 2 H2O. In terms of biological role, catalyzes the decomposition of hydrogen peroxide into water and oxygen. The chain is Manganese catalase from Lactiplantibacillus plantarum (Lactobacillus plantarum).